The sequence spans 137 residues: MLQPKRTKFRKQHKGRIHGEAKGGFNLNFGSYALKAIEPERVTARQIEAARRAITRHMKRQGRVWIRIFPDVPVSSKPTEVRMGKGKGSVDYWAARVHPGRIMFEIDGVNDTIAREALRLGAQKLPVLTRIVAREDW.

The protein belongs to the universal ribosomal protein uL16 family. As to quaternary structure, part of the 50S ribosomal subunit.

Functionally, binds 23S rRNA and is also seen to make contacts with the A and possibly P site tRNAs. This is Large ribosomal subunit protein uL16 from Paracoccus denitrificans (strain Pd 1222).